Consider the following 140-residue polypeptide: ATP synthase epsilon chain (140 aa).

The protein belongs to the ATPase epsilon chain family. As to quaternary structure, F-type ATPases have 2 components, CF(1) - the catalytic core - and CF(0) - the membrane proton channel. CF(1) has five subunits: alpha(3), beta(3), gamma(1), delta(1), epsilon(1). CF(0) has three main subunits: a, b and c.

It is found in the cell inner membrane. In terms of biological role, produces ATP from ADP in the presence of a proton gradient across the membrane. The polypeptide is ATP synthase epsilon chain (Marinobacter nauticus (strain ATCC 700491 / DSM 11845 / VT8) (Marinobacter aquaeolei)).